We begin with the raw amino-acid sequence, 209 residues long: uncharacterized protein (209 aa).

The next 4 membrane-spanning stretches (helical) occupy residues 21-41 (LAYLNVLWILFSLAGLVVFGL), 81-101 (ILGLIVVTAALFLFADMRIAA), 107-127 (VLVNVFVSISLIFAFVVLYVF), and 159-179 (AAGAVGVLCLVLFHVTFLLFF).

The protein resides in the cell membrane. This is an uncharacterized protein from Bacillus subtilis (strain 168).